We begin with the raw amino-acid sequence, 170 residues long: Adenine phosphoribosyltransferase (170 aa).

Belongs to the purine/pyrimidine phosphoribosyltransferase family. Homodimer.

It localises to the cytoplasm. The catalysed reaction is AMP + diphosphate = 5-phospho-alpha-D-ribose 1-diphosphate + adenine. The protein operates within purine metabolism; AMP biosynthesis via salvage pathway; AMP from adenine: step 1/1. Its function is as follows. Catalyzes a salvage reaction resulting in the formation of AMP, that is energically less costly than de novo synthesis. In Lactococcus lactis subsp. lactis (strain IL1403) (Streptococcus lactis), this protein is Adenine phosphoribosyltransferase.